A 376-amino-acid chain; its full sequence is Aspartate-semialdehyde dehydrogenase (376 aa).

NADP(+) is bound by residues Arg-11–Val-14, Thr-38–Ser-39, and Gln-74. A phosphate-binding site is contributed by Arg-103. Cys-136 acts as the Acyl-thioester intermediate in catalysis. Residue Gln-163 coordinates substrate. NADP(+) is bound by residues Ser-166–Gly-167 and Pro-194. Glu-242 contributes to the substrate binding site. Lys-245 contributes to the phosphate binding site. Substrate is bound at residue Arg-273. His-280 acts as the Proton acceptor in catalysis. Gln-356 is an NADP(+) binding site.

This sequence belongs to the aspartate-semialdehyde dehydrogenase family. As to quaternary structure, homodimer.

It carries out the reaction L-aspartate 4-semialdehyde + phosphate + NADP(+) = 4-phospho-L-aspartate + NADPH + H(+). It participates in amino-acid biosynthesis; L-lysine biosynthesis via DAP pathway; (S)-tetrahydrodipicolinate from L-aspartate: step 2/4. The protein operates within amino-acid biosynthesis; L-methionine biosynthesis via de novo pathway; L-homoserine from L-aspartate: step 2/3. It functions in the pathway amino-acid biosynthesis; L-threonine biosynthesis; L-threonine from L-aspartate: step 2/5. Functionally, catalyzes the NADPH-dependent formation of L-aspartate-semialdehyde (L-ASA) by the reductive dephosphorylation of L-aspartyl-4-phosphate. This Bordetella pertussis (strain Tohama I / ATCC BAA-589 / NCTC 13251) protein is Aspartate-semialdehyde dehydrogenase.